The chain runs to 153 residues: Transcription antitermination protein NusB (153 aa).

It belongs to the NusB family.

Its function is as follows. Involved in transcription antitermination. Required for transcription of ribosomal RNA (rRNA) genes. Binds specifically to the boxA antiterminator sequence of the ribosomal RNA (rrn) operons. The chain is Transcription antitermination protein NusB from Beutenbergia cavernae (strain ATCC BAA-8 / DSM 12333 / CCUG 43141 / JCM 11478 / NBRC 16432 / NCIMB 13614 / HKI 0122).